The sequence spans 178 residues: Large ribosomal subunit protein uL6 (178 aa).

This sequence belongs to the universal ribosomal protein uL6 family. As to quaternary structure, part of the 50S ribosomal subunit.

In terms of biological role, this protein binds to the 23S rRNA, and is important in its secondary structure. It is located near the subunit interface in the base of the L7/L12 stalk, and near the tRNA binding site of the peptidyltransferase center. This is Large ribosomal subunit protein uL6 from Campylobacter jejuni subsp. jejuni serotype O:2 (strain ATCC 700819 / NCTC 11168).